Here is a 166-residue protein sequence, read N- to C-terminus: Large ribosomal subunit protein mL49 (166 aa).

A disordered region spans residues 56 to 78; sequence RIPDPPKHEHYPTPSGWQPPRDP.

The protein belongs to the mitochondrion-specific ribosomal protein mL49 family. As to quaternary structure, component of the mitochondrial large ribosomal subunit (mt-LSU). Mature mammalian 55S mitochondrial ribosomes consist of a small (28S) and a large (39S) subunit. The 28S small subunit contains a 12S ribosomal RNA (12S mt-rRNA) and 30 different proteins. The 39S large subunit contains a 16S rRNA (16S mt-rRNA), a copy of mitochondrial valine transfer RNA (mt-tRNA(Val)), which plays an integral structural role, and 52 different proteins. Interacts with OXA1L. In terms of tissue distribution, ubiquitous.

The protein localises to the mitochondrion. The chain is Large ribosomal subunit protein mL49 (MRPL49) from Homo sapiens (Human).